Reading from the N-terminus, the 318-residue chain is Pyrimidine-specific ribonucleoside hydrolase RihA (318 aa).

Histidine 240 is a catalytic residue.

The protein belongs to the IUNH family. RihA subfamily.

In terms of biological role, hydrolyzes cytidine or uridine to ribose and cytosine or uracil, respectively. This chain is Pyrimidine-specific ribonucleoside hydrolase RihA, found in Shewanella sp. (strain ANA-3).